A 402-amino-acid polypeptide reads, in one-letter code: Arginine deiminase (402 aa).

Residue Cys392 is the Amidino-cysteine intermediate of the active site.

Belongs to the arginine deiminase family.

It is found in the cytoplasm. It carries out the reaction L-arginine + H2O = L-citrulline + NH4(+). Its pathway is amino-acid degradation; L-arginine degradation via ADI pathway; carbamoyl phosphate from L-arginine: step 1/2. The polypeptide is Arginine deiminase (Mycobacterium avium (strain 104)).